Reading from the N-terminus, the 497-residue chain is Probable cytosol aminopeptidase (497 aa).

Residues Lys263 and Asp268 each coordinate Mn(2+). Lys275 is a catalytic residue. Residues Asp286, Asp345, and Glu347 each coordinate Mn(2+). Residue Arg349 is part of the active site.

It belongs to the peptidase M17 family. Requires Mn(2+) as cofactor.

The protein resides in the cytoplasm. The catalysed reaction is Release of an N-terminal amino acid, Xaa-|-Yaa-, in which Xaa is preferably Leu, but may be other amino acids including Pro although not Arg or Lys, and Yaa may be Pro. Amino acid amides and methyl esters are also readily hydrolyzed, but rates on arylamides are exceedingly low.. The enzyme catalyses Release of an N-terminal amino acid, preferentially leucine, but not glutamic or aspartic acids.. Functionally, presumably involved in the processing and regular turnover of intracellular proteins. Catalyzes the removal of unsubstituted N-terminal amino acids from various peptides. The protein is Probable cytosol aminopeptidase of Allorhizobium ampelinum (strain ATCC BAA-846 / DSM 112012 / S4) (Agrobacterium vitis (strain S4)).